Consider the following 300-residue polypeptide: Lysenin-related protein 2 (300 aa).

Residues 12-35 form an N-terminal cap domain region; that stretch reads EQIEVDVVAVWKEGYVYENRGSTS. Residues 36-109 are beta-hairpin domain; sequence VEQKIKITKG…SKEIEHTITI (74 aa). An N-terminal cap domain region spans residues 110–158; sequence PPTSKFTRWQLNADVGGADIEYMYLIDEVTPIGGTLSIPQVIKSRAKIL. A C-terminal receptor-binding domain region spans residues 159-299; the sequence is VGREIYLGET…EDKWILEVVK (141 aa). Residues lysine 187, serine 229, tyrosine 235, and tyrosine 284 each coordinate an N-(acyl)-sphingosylphosphocholine. Cysteine 274 and cysteine 285 form a disulfide bridge.

The protein belongs to the lysenin family. As to quaternary structure, binds to sphingomyelin as a monomer by using its C-terminal domain. Forms a nonamer when sphingomyelin/LRP-2 ratio is lower than ca 500. Oligomerization, but not binding, is influenced by the fluidity of sphingomyelin. Expressed by coelomocytes.

Its subcellular location is the secreted. It localises to the target cell membrane. Pore-forming toxin that specifically binds sphingomyelin in the plasma membrane of various cells. Has hemolytic activity. It also has antibacterial activities against B.megaterium. This chain is Lysenin-related protein 2, found in Eisenia fetida (Red wiggler worm).